The sequence spans 999 residues: Signal peptide, CUB and EGF-like domain-containing protein 2 (999 aa).

The first 31 residues, 1 to 31, serve as a signal peptide directing secretion; sequence MGVAGRNRPGAAWAVLLLLLLLPPLLLLAGA. The EGF-like 1; calcium-binding domain maps to 45-85; the sequence is DVDECAQGLDDCHADALCQNTPTSYKCSCKPGYQGEGRQCE. Cystine bridges form between cysteine 49–cysteine 62, cysteine 56–cysteine 71, cysteine 73–cysteine 84, cysteine 90–cysteine 102, cysteine 98–cysteine 111, and cysteine 113–cysteine 126. One can recognise an EGF-like 2; calcium-binding domain in the interval 86–127; sequence DIDECGNELNGGCVHDCLNIPGNYRCTCFDGFMLAHDGHNCL. An EGF-like 3; calcium-binding domain is found at 128–168; it reads DVDECLENNGGCQHTCVNVMGSYECCCKEGFFLSDNQHTCI. 3 consecutive EGF-like domains span residues 177–213, 217–252, and 286–321; these read CMNK…QRDC, CNHG…GRSC, and CAVN…GKTC. Residues 323-363 form the EGF-like 7; calcium-binding domain; it reads DIDECQTRNGGCDHFCKNIVGSFDCGCKKGFKLLTDEKSCQ. The EGF-like 8; calcium-binding domain occupies 364-402; it reads DVDECSLDRTCDHSCINHPGTFACACNRGYTLYGFTHCG. Disulfide bonds link cysteine 368–cysteine 378, cysteine 374–cysteine 387, cysteine 389–cysteine 401, cysteine 407–cysteine 418, cysteine 414–cysteine 427, and cysteine 429–cysteine 442. Positions 403 to 443 constitute an EGF-like 9; calcium-binding domain; that stretch reads DTNECSINNGGCQQVCVNTVGSYECQCHPGYKLHWNKKDCV. N-linked (GlcNAc...) asparagine glycosylation is present at asparagine 659. A disulfide bridge connects residues cysteine 809 and cysteine 835. In terms of domain architecture, CUB spans 809 to 921; the sequence is CGGELGDFTG…RGFQVPYVTY (113 aa). An interaction with the cholesterol-anchor of SHH region spans residues 847–856; it reads ILIVVPEIFL. Cysteine 862 and cysteine 883 are joined by a disulfide.

Forms homooligomers. Forms heterooligomers with SCUBE1. Forms heterooligomers with SCUBE3. Interacts with SHH via the cholesterol anchor of the dually lipid-modified SHH (ShhNp). Interacts with PTCH1. Interacts with VEGFR2. In terms of processing, N-glycosylated. As to expression, expressed in a broad spectrum of adult tissues.

It localises to the secreted. The protein localises to the cell surface. Its function is as follows. Lipid-binding protein required for SHH long-range signaling by binding to the dually lipid-modified SHH (ShhNp) and by promoting ShhNp mobilization, solubilization and release from the cell membrane. Acts by enhancing the proteolytic processing (shedding) of the lipid-modified N- and C- terminal of ShhNp at the cell surface. Synergizes with DISP1 to increase SHH secretion. Probable cell surface coreceptor for VEGFR2 involved in VEGFR2-mediated angiogenesis. In Homo sapiens (Human), this protein is Signal peptide, CUB and EGF-like domain-containing protein 2.